A 79-amino-acid chain; its full sequence is Probable [Fe-S]-dependent transcriptional repressor (79 aa).

Cysteine 54, cysteine 59, cysteine 62, and cysteine 68 together coordinate iron-sulfur cluster.

Belongs to the FeoC family.

Functionally, may function as a transcriptional regulator that controls feoABC expression. The protein is Probable [Fe-S]-dependent transcriptional repressor of Photorhabdus laumondii subsp. laumondii (strain DSM 15139 / CIP 105565 / TT01) (Photorhabdus luminescens subsp. laumondii).